We begin with the raw amino-acid sequence, 571 residues long: Protein tesmin/TSO1-like CXC 6 (571 aa).

Disordered regions lie at residues 1–52, 92–119, 293–325, 370–411, and 507–571; these read MGEG…AAAS, IRHP…QKKK, NQGT…GGNA, LANQ…RSLS, and NGVS…KKDL. A compositionally biased stretch (basic and acidic residues) spans 7-16; sequence GDKFPPKTDE. The CRC domain maps to 117–241; the sequence is KKKQCNCKHS…KCLDCKNFEG (125 aa). 3 stretches are compositionally biased toward polar residues: residues 293 to 319, 373 to 388, and 508 to 539; these read NQGT…QTGS, QKET…QGHV, and GVSQ…QTAK. The segment covering 540-557 has biased composition (low complexity); the sequence is QPSQLTTTTTTPNTSSQT.

The protein belongs to the lin-54 family. As to expression, ubiquitous but expressed mostly in flowers.

It is found in the nucleus. Plays a role in development of both male and female reproductive tissues. The chain is Protein tesmin/TSO1-like CXC 6 (TCX6) from Arabidopsis thaliana (Mouse-ear cress).